Here is a 147-residue protein sequence, read N- to C-terminus: Putative HTH-type transcriptional regulator slr0846 (147 aa).

Positions 2–130 constitute an HTH rrf2-type domain; that stretch reads KLTTKSHYSV…YSITLADLYY (129 aa).

This chain is Putative HTH-type transcriptional regulator slr0846, found in Synechocystis sp. (strain ATCC 27184 / PCC 6803 / Kazusa).